Here is a 206-residue protein sequence, read N- to C-terminus: LexA repressor (206 aa).

Residues 28-48 constitute a DNA-binding region (H-T-H motif); it reads RAEIARELGFRSANAAEEHLK. Active-site for autocatalytic cleavage activity residues include Ser123 and Lys160.

It belongs to the peptidase S24 family. As to quaternary structure, homodimer.

The catalysed reaction is Hydrolysis of Ala-|-Gly bond in repressor LexA.. In terms of biological role, represses a number of genes involved in the response to DNA damage (SOS response), including recA and lexA. In the presence of single-stranded DNA, RecA interacts with LexA causing an autocatalytic cleavage which disrupts the DNA-binding part of LexA, leading to derepression of the SOS regulon and eventually DNA repair. This is LexA repressor from Vibrio campbellii (strain ATCC BAA-1116).